The sequence spans 248 residues: 4-hydroxy-tetrahydrodipicolinate reductase (248 aa).

NAD(+) is bound by residues D32, G74 to T76, and S99 to F102. The active-site Proton donor/acceptor is H134. H135 is a binding site for (S)-2,3,4,5-tetrahydrodipicolinate. The Proton donor role is filled by K138. G144–T145 is a binding site for (S)-2,3,4,5-tetrahydrodipicolinate.

It belongs to the DapB family.

It is found in the cytoplasm. It carries out the reaction (S)-2,3,4,5-tetrahydrodipicolinate + NAD(+) + H2O = (2S,4S)-4-hydroxy-2,3,4,5-tetrahydrodipicolinate + NADH + H(+). It catalyses the reaction (S)-2,3,4,5-tetrahydrodipicolinate + NADP(+) + H2O = (2S,4S)-4-hydroxy-2,3,4,5-tetrahydrodipicolinate + NADPH + H(+). It participates in amino-acid biosynthesis; L-lysine biosynthesis via DAP pathway; (S)-tetrahydrodipicolinate from L-aspartate: step 4/4. Catalyzes the conversion of 4-hydroxy-tetrahydrodipicolinate (HTPA) to tetrahydrodipicolinate. This chain is 4-hydroxy-tetrahydrodipicolinate reductase, found in Chlorobium luteolum (strain DSM 273 / BCRC 81028 / 2530) (Pelodictyon luteolum).